The primary structure comprises 151 residues: S-ribosylhomocysteine lyase (151 aa).

3 residues coordinate Fe cation: His54, His58, and Cys121.

Belongs to the LuxS family. In terms of assembly, homodimer. Fe cation serves as cofactor.

It catalyses the reaction S-(5-deoxy-D-ribos-5-yl)-L-homocysteine = (S)-4,5-dihydroxypentane-2,3-dione + L-homocysteine. Its function is as follows. Involved in the synthesis of autoinducer 2 (AI-2) which is secreted by bacteria and is used to communicate both the cell density and the metabolic potential of the environment. The regulation of gene expression in response to changes in cell density is called quorum sensing. Catalyzes the transformation of S-ribosylhomocysteine (RHC) to homocysteine (HC) and 4,5-dihydroxy-2,3-pentadione (DPD). In Clostridium perfringens (strain ATCC 13124 / DSM 756 / JCM 1290 / NCIMB 6125 / NCTC 8237 / Type A), this protein is S-ribosylhomocysteine lyase.